Consider the following 329-residue polypeptide: MCTGLALETKDGLHLFGRNMDIEYSFNQSIIFIPRNFKCVNKSNKKELTTKYAVLGMGTIFDDYPTFADGMNEKGLGCAGLNFPVYVSYSKEDIEGKTNIPVYNFLLWVLANFSSVEEVKEALKNANIVDIPISENIPNTTLHWMISDITGKSIVVEQTKEKLNVFDNNIGVLTNSPTFDWHVANLNQYVGLRYNQVPEFKLGDQSLTALGQGTGLVGLPGDFTPASRFIRVAFLRDAMIKNDKDSIDLIEFFHILNNVAMVRGSTRTVEEKSDLTQYTSCMCLEKGIYYYNTYENNQINAIDMNKENLDGNEIKTYKYNKTLSINHVN.

Cysteine 2 serves as the catalytic Nucleophile; acyl-thioester intermediate. Residues cysteine 2 and arginine 18 each contribute to the deoxycholate site. Asparagine 82 lines the taurine pocket.

This sequence belongs to the peptidase C59 family. In terms of assembly, homotetramer. The tetramer consists of a dimer of dimers.

It catalyses the reaction glycocholate + H2O = cholate + glycine. It carries out the reaction cholate + taurine = taurocholate + H2O. The catalysed reaction is taurodeoxycholate + H2O = deoxycholate + taurine. The enzyme catalyses glycodeoxycholate + H2O = deoxycholate + glycine. It catalyses the reaction chenodeoxycholate + glycine = glycochenodeoxycholate + H2O. It carries out the reaction taurochenodeoxycholate + H2O = chenodeoxycholate + taurine. The catalysed reaction is an L-alpha-amino acid + cholate = an N-choloyl-L-alpha-amino acid + H2O. The enzyme catalyses an L-alpha-amino acid + taurocholate = an N-choloyl-L-alpha-amino acid + taurine. It catalyses the reaction glycocholate + an L-alpha-amino acid = an N-choloyl-L-alpha-amino acid + glycine. It carries out the reaction cholate + L-histidine = L-histidocholate + H2O. The catalysed reaction is taurocholate + L-histidine = L-histidocholate + taurine. The enzyme catalyses glycocholate + L-histidine = L-histidocholate + glycine. It catalyses the reaction cholate + L-arginine = L-arginocholate + H2O. It carries out the reaction taurocholate + L-arginine = L-arginocholate + taurine. The catalysed reaction is glycocholate + L-arginine = L-arginocholate + glycine. The enzyme catalyses cholate + L-phenylalanine = L-phenylalanocholate + H2O. It catalyses the reaction taurocholate + L-phenylalanine = L-phenylalanocholate + taurine. Its pathway is lipid metabolism; bile acid biosynthesis. In terms of biological role, possesses dual functions in bile acid metabolism. Acts as a bile salt hydrolase that catalyzes the deconjugation of glycine- and taurine-linked bile salts, which occurs naturally in the intestines of humans, releasing amino acid residues and deconjugated bile salts (bile acids). Can hydrolyze the amide bond in major human conjugated bile salts, such as glycocholate (GCA), taurocholate (TCA) and taurodeoxycholate (TDCA). Shows a slight preference for taurine-conjugated bile acids as substrates. Also acts as an amine N-acyltransferase that conjugates a wide variety of amino acids to conjugated and non-conjugated bile acids, thus producing bacterial bile acid amidates (BBAAs) - also named microbially conjugated bile acids (MCBAs) - in the gastrointestinal tract. These BBAAs may facilitate communication between the microbiota and host through the activation of human ligand-activated transcription factors. This Clostridium perfringens (strain 13 / Type A) protein is Bile salt hydrolase/transferase (cbh).